A 255-amino-acid chain; its full sequence is Folate receptor alpha (255 aa).

The signal sequence occupies residues 1–24; sequence MAHLMTVQLLLLVMWMAECAQSRA. 8 disulfide bridges follow: C35-C63, C55-C103, C64-C107, C87-C173, C94-C144, C133-C207, C137-C187, and C150-C167. A glycan (N-linked (GlcNAc...) asparagine) is linked at N67. Folate contacts are provided by residues D101, Y105, 122–126, 155–160, and S194; these read WRKER and HKGWNW. N159 carries N-linked (GlcNAc...) asparagine glycosylation. Residue N199 is glycosylated (N-linked (GlcNAc...) asparagine). S232 is lipidated: GPI-anchor amidated serine. The propeptide at 233 to 255 is removed in mature form; it reads GAGFHGTWPLLCSLSLVLLWVIS.

Belongs to the folate receptor family. The secreted form is derived from the membrane-bound form either by cleavage of the GPI anchor, or/and by proteolysis catalyzed by a metalloprotease. Detected in kidney proximal tubules (at protein level).

The protein resides in the cell membrane. The protein localises to the apical cell membrane. It localises to the basolateral cell membrane. It is found in the secreted. Its subcellular location is the cytoplasmic vesicle. The protein resides in the clathrin-coated vesicle. The protein localises to the endosome. In terms of biological role, binds to folate and reduced folic acid derivatives and mediates delivery of 5-methyltetrahydrofolate and folate analogs into the interior of cells. Has high affinity for folate and folic acid analogs at neutral pH. Exposure to slightly acidic pH after receptor endocytosis triggers a conformation change that strongly reduces its affinity for folates and mediates their release. Required for normal embryonic development and normal cell proliferation. Required for renal folate reabsorption. This chain is Folate receptor alpha (Folr1), found in Mus musculus (Mouse).